We begin with the raw amino-acid sequence, 454 residues long: uncharacterized protein (454 aa).

An N-terminal signal peptide occupies residues 1 to 21 (MKYKTVKSIPLFLLGSIVFTA). Residue Cys22 is the site of N-palmitoyl cysteine attachment. Cys22 is lipidated: S-diacylglycerol cysteine. Over residues 55-64 (ASSSSSTTTS) the composition is skewed to low complexity. Residues 55–87 (ASSSSSTTTSNDDNNQKGYFLETNRSTGTYDPN) form a disordered region. A compositionally biased stretch (polar residues) spans 65-87 (NDDNNQKGYFLETNRSTGTYDPN).

It is found in the cell membrane. This is an uncharacterized protein from Mycoplasma pneumoniae (strain ATCC 29342 / M129 / Subtype 1) (Mycoplasmoides pneumoniae).